The primary structure comprises 422 residues: Enolase (422 aa).

A (2R)-2-phosphoglycerate-binding site is contributed by glutamine 162. The active-site Proton donor is glutamate 204. 3 residues coordinate Mg(2+): aspartate 241, glutamate 285, and aspartate 312. (2R)-2-phosphoglycerate is bound by residues lysine 337, arginine 366, serine 367, and lysine 388. Residue lysine 337 is the Proton acceptor of the active site.

The protein belongs to the enolase family. It depends on Mg(2+) as a cofactor.

The protein localises to the cytoplasm. It is found in the secreted. Its subcellular location is the cell surface. It carries out the reaction (2R)-2-phosphoglycerate = phosphoenolpyruvate + H2O. It functions in the pathway carbohydrate degradation; glycolysis; pyruvate from D-glyceraldehyde 3-phosphate: step 4/5. Its function is as follows. Catalyzes the reversible conversion of 2-phosphoglycerate (2-PG) into phosphoenolpyruvate (PEP). It is essential for the degradation of carbohydrates via glycolysis. This Wolinella succinogenes (strain ATCC 29543 / DSM 1740 / CCUG 13145 / JCM 31913 / LMG 7466 / NCTC 11488 / FDC 602W) (Vibrio succinogenes) protein is Enolase.